The chain runs to 319 residues: tRNA uridine(34) hydroxylase (319 aa).

Residues 124 to 218 enclose the Rhodanese domain; the sequence is LDEDTVILDA…YGKNEETKGE (95 aa). Cys-178 serves as the catalytic Cysteine persulfide intermediate.

This sequence belongs to the TrhO family.

It catalyses the reaction uridine(34) in tRNA + AH2 + O2 = 5-hydroxyuridine(34) in tRNA + A + H2O. Catalyzes oxygen-dependent 5-hydroxyuridine (ho5U) modification at position 34 in tRNAs. The polypeptide is tRNA uridine(34) hydroxylase (Listeria monocytogenes serovar 1/2a (strain ATCC BAA-679 / EGD-e)).